Here is a 136-residue protein sequence, read N- to C-terminus: Histone H3.2 (136 aa).

A disordered region spans residues 1–45 (MARTKQTARKSTGGKAPRKQLATKAARKSAPATGGVKKPHRYRPG). The residue at position 3 (arginine 3) is an Asymmetric dimethylarginine; by PRMT6; alternate. Arginine 3 carries the citrulline; alternate modification. Threonine 4 is modified (phosphothreonine; by HASPIN and VRK1). Allysine; alternate is present on lysine 5. Lysine 5 is modified (N6,N6,N6-trimethyllysine; alternate). Lysine 5 carries the N6,N6-dimethyllysine; alternate modification. Lysine 5 bears the N6-(2-hydroxyisobutyryl)lysine; alternate mark. Lysine 5 is subject to N6-(beta-hydroxybutyryl)lysine; alternate. At lysine 5 the chain carries N6-acetyllysine; alternate. An N6-crotonyllysine; alternate modification is found at lysine 5. Lysine 5 bears the N6-methyllysine; alternate mark. Glutamine 6 carries the 5-glutamyl dopamine; alternate modification. At glutamine 6 the chain carries 5-glutamyl serotonin; alternate. Residue threonine 7 is modified to Phosphothreonine; by PKC. Arginine 9 is subject to Citrulline; alternate. Arginine 9 is modified (symmetric dimethylarginine; by PRMT5; alternate). Lysine 10 is subject to N6,N6,N6-trimethyllysine; alternate. Lysine 10 carries the post-translational modification N6,N6-dimethyllysine; alternate. Position 10 is an N6-(2-hydroxyisobutyryl)lysine; alternate (lysine 10). Lysine 10 is modified (N6-(beta-hydroxybutyryl)lysine; alternate). Residue lysine 10 is modified to N6-acetyllysine; alternate. Lysine 10 is modified (N6-crotonyllysine; alternate). Lysine 10 carries the post-translational modification N6-methyllysine; alternate. The residue at position 10 (lysine 10) is an N6-lactoyllysine; alternate. ADP-ribosylserine; alternate is present on serine 11. The residue at position 11 (serine 11) is a Phosphoserine; alternate; by AURKB, AURKC, RPS6KA3, RPS6KA4 and RPS6KA5. Threonine 12 carries the phosphothreonine; by PKC modification. Lysine 15 is subject to N6-(2-hydroxyisobutyryl)lysine; alternate. Lysine 15 carries the post-translational modification N6-(beta-hydroxybutyryl)lysine; alternate. N6-acetyllysine; alternate is present on lysine 15. An N6-lactoyllysine; alternate modification is found at lysine 15. Position 15 is an N6-glutaryllysine; alternate (lysine 15). At lysine 15 the chain carries N6-succinyllysine; alternate. The residue at position 18 (arginine 18) is a Citrulline; alternate. Arginine 18 is subject to Asymmetric dimethylarginine; by CARM1; alternate. An N6-(2-hydroxyisobutyryl)lysine; alternate mark is found at lysine 19 and lysine 24. N6-(beta-hydroxybutyryl)lysine; alternate occurs at positions 19 and 24. Residues lysine 19 and lysine 24 each carry the N6-acetyllysine; alternate modification. Lysine 19 and lysine 24 each carry N6-crotonyllysine; alternate. Residues lysine 19 and lysine 24 each carry the N6-methyllysine; alternate modification. Residues lysine 19 and lysine 24 each carry the N6-lactoyllysine; alternate modification. 2 positions are modified to N6-glutaryllysine; alternate: lysine 19 and lysine 24. N6-butyryllysine; alternate is present on residues lysine 19 and lysine 24. The N6-decanoyllysine moiety is linked to residue lysine 19. The residue at position 27 (arginine 27) is a Citrulline. An N6,N6,N6-trimethyllysine; alternate modification is found at lysine 28. N6,N6-dimethyllysine; alternate is present on lysine 28. Lysine 28 is subject to N6-(2-hydroxyisobutyryl)lysine; alternate. Lysine 28 carries the N6-acetyllysine; alternate modification. At lysine 28 the chain carries N6-crotonyllysine; alternate. Lysine 28 carries the post-translational modification N6-methyllysine; alternate. Lysine 28 carries the N6-lactoyllysine; alternate modification. At lysine 28 the chain carries N6-glutaryllysine; alternate. Serine 29 bears the ADP-ribosylserine; alternate mark. Serine 29 is modified (phosphoserine; alternate; by AURKB, AURKC and RPS6KA5). N6,N6,N6-trimethyllysine; alternate is present on lysine 37. N6,N6-dimethyllysine; alternate is present on lysine 37. Lysine 37 carries the N6-(2-hydroxyisobutyryl)lysine; alternate modification. The residue at position 37 (lysine 37) is an N6-acetyllysine; alternate. Residue lysine 37 is modified to N6-methyllysine; alternate. At lysine 38 the chain carries N6-methyllysine. Tyrosine 42 carries the post-translational modification Phosphotyrosine. Lysine 57 carries the post-translational modification N6,N6,N6-trimethyllysine; alternate. Residue lysine 57 is modified to N6-(2-hydroxyisobutyryl)lysine; alternate. Lysine 57 is modified (N6-(beta-hydroxybutyryl)lysine; alternate). Lysine 57 carries the N6-acetyllysine; alternate modification. Lysine 57 is subject to N6-crotonyllysine; alternate. Lysine 57 is modified (N6-lactoyllysine; alternate). Lysine 57 bears the N6-glutaryllysine; alternate mark. Position 57 is an N6-succinyllysine; alternate (lysine 57). Position 57 is an N6-methyllysine; by EHMT2; alternate (lysine 57). Position 58 is a phosphoserine (serine 58). An N6-(2-hydroxyisobutyryl)lysine; alternate mark is found at lysine 65 and lysine 80. Residues lysine 65 and lysine 80 each carry the N6-methyllysine; alternate modification. N6,N6,N6-trimethyllysine; alternate is present on lysine 80. Lysine 80 carries the N6,N6-dimethyllysine; alternate modification. Lysine 80 is subject to N6-acetyllysine; alternate. Lysine 80 is subject to N6-lactoyllysine; alternate. Lysine 80 carries the N6-glutaryllysine; alternate modification. Lysine 80 is subject to N6-succinyllysine; alternate. Position 81 is a phosphothreonine (threonine 81). Position 87 is a phosphoserine (serine 87). Position 108 is a phosphothreonine (threonine 108). Residue cysteine 111 is the site of S-palmitoyl cysteine attachment. N6-acetyllysine; alternate occurs at positions 116 and 123. N6-glutaryllysine; alternate occurs at positions 116 and 123. An N6-(2-hydroxyisobutyryl)lysine; alternate modification is found at lysine 123. Residue lysine 123 is modified to N6-methyllysine; alternate. Lysine 123 is modified (N6-succinyllysine; alternate).

This sequence belongs to the histone H3 family. As to quaternary structure, the nucleosome is a histone octamer containing two molecules each of H2A, H2B, H3 and H4 assembled in one H3-H4 heterotetramer and two H2A-H2B heterodimers. The octamer wraps approximately 147 bp of DNA. During nucleosome assembly the chaperone ASF1A interacts with the histone H3-H4 heterodimer (via C-terminus of H3); this interaction is direct. Interacts with DNAJC9, CHAF1A and CHAF1B. Interacts with NASP; NASP is a histone chaperone that stabilizes and maintains a soluble pool of Histone H3-H4 dimers. Acetylation is generally linked to gene activation. Acetylation on Lys-10 (H3K9ac) impairs methylation at Arg-9 (H3R8me2s). Acetylation on Lys-19 (H3K18ac) and Lys-24 (H3K24ac) favors methylation at Arg-18 (H3R17me). Acetylation at Lys-123 (H3K122ac) by EP300/p300 plays a central role in chromatin structure: localizes at the surface of the histone octamer and stimulates transcription, possibly by promoting nucleosome instability. In terms of processing, citrullination at Arg-9 (H3R8ci) and/or Arg-18 (H3R17ci) by PADI4 impairs methylation and represses transcription. Post-translationally, asymmetric dimethylation at Arg-18 (H3R17me2a) by CARM1 is linked to gene activation. Symmetric dimethylation at Arg-9 (H3R8me2s) by PRMT5 is linked to gene repression. Asymmetric dimethylation at Arg-3 (H3R2me2a) by PRMT6 is linked to gene repression and is mutually exclusive with H3 Lys-5 methylation (H3K4me2 and H3K4me3). H3R2me2a is present at the 3' of genes regardless of their transcription state and is enriched on inactive promoters, while it is absent on active promoters. Methylation at Lys-5 (H3K4me), Lys-37 (H3K36me) and Lys-80 (H3K79me) are linked to gene activation. Methylation at Lys-5 (H3K4me) facilitates subsequent acetylation of H3 and H4. Methylation at Lys-80 (H3K79me) is associated with DNA double-strand break (DSB) responses and is a specific target for TP53BP1. Methylation at Lys-10 (H3K9me) and Lys-28 (H3K27me) are linked to gene repression. Methylation at Lys-10 (H3K9me) is a specific target for HP1 proteins (CBX1, CBX3 and CBX5) and prevents subsequent phosphorylation at Ser-11 (H3S10ph) and acetylation of H3 and H4. Methylation at Lys-5 (H3K4me) and Lys-80 (H3K79me) require preliminary monoubiquitination of H2B at 'Lys-120'. Methylation at Lys-10 (H3K9me) and Lys-28 (H3K27me) are enriched in inactive X chromosome chromatin. Monomethylation at Lys-57 (H3K56me1) by EHMT2/G9A in G1 phase promotes interaction with PCNA and is required for DNA replication. In terms of processing, phosphorylated at Thr-4 (H3T3ph) by VRK1. Phosphorylated at Thr-4 (H3T3ph) by HASPIN during prophase and dephosphorylated during anaphase. Phosphorylation at Ser-11 (H3S10ph) by AURKB is crucial for chromosome condensation and cell-cycle progression during mitosis and meiosis. In addition phosphorylation at Ser-11 (H3S10ph) by RPS6KA4 and RPS6KA5 is important during interphase because it enables the transcription of genes following external stimulation, like mitogens, stress, growth factors or UV irradiation and result in the activation of genes, such as c-fos and c-jun. Phosphorylation at Ser-11 (H3S10ph), which is linked to gene activation, prevents methylation at Lys-10 (H3K9me) but facilitates acetylation of H3 and H4. Phosphorylation at Ser-11 (H3S10ph) by AURKB mediates the dissociation of HP1 proteins (CBX1, CBX3 and CBX5) from heterochromatin. Phosphorylation at Ser-11 (H3S10ph) is also an essential regulatory mechanism for neoplastic cell transformation. Phosphorylated at Ser-29 (H3S28ph) by MAP3K20 isoform 1, RPS6KA5 or AURKB during mitosis or upon ultraviolet B irradiation. Phosphorylation at Thr-7 (H3T6ph) by PRKCB is a specific tag for epigenetic transcriptional activation that prevents demethylation of Lys-5 (H3K4me) by LSD1/KDM1A. At centromeres, specifically phosphorylated at Thr-12 (H3T11ph) from prophase to early anaphase, by DAPK3 and PKN1. Phosphorylation at Thr-12 (H3T11ph) by PKN1 or isoform M2 of PKM (PKM2) is a specific tag for epigenetic transcriptional activation that promotes demethylation of Lys-10 (H3K9me) by KDM4C/JMJD2C. Phosphorylation at Tyr-42 (H3Y41ph) by JAK2 promotes exclusion of CBX5 (HP1 alpha) from chromatin. Post-translationally, monoubiquitinated by RAG1 in lymphoid cells, monoubiquitination is required for V(D)J recombination. Ubiquitinated by the CUL4-DDB-RBX1 complex in response to ultraviolet irradiation. This may weaken the interaction between histones and DNA and facilitate DNA accessibility to repair proteins. Lysine deamination at Lys-5 (H3K4all) to form allysine is mediated by LOXL2. Allysine formation by LOXL2 only takes place on H3K4me3 and results in gene repression. In terms of processing, crotonylation (Kcr) is specifically present in male germ cells and marks testis-specific genes in post-meiotic cells, including X-linked genes that escape sex chromosome inactivation in haploid cells. Crotonylation marks active promoters and enhancers and confers resistance to transcriptional repressors. It is also associated with post-meiotically activated genes on autosomes. Post-translationally, butyrylation of histones marks active promoters and competes with histone acetylation. It is present during late spermatogenesis. Succinylation at Lys-80 (H3K79succ) by KAT2A takes place with a maximum frequency around the transcription start sites of genes. It gives a specific tag for epigenetic transcription activation. Desuccinylation at Lys-123 (H3K122succ) by SIRT7 in response to DNA damage promotes chromatin condensation and double-strand breaks (DSBs) repair. In terms of processing, serine ADP-ribosylation by PARP1 or PARP2 constitutes the primary form of ADP-ribosylation of proteins in response to DNA damage. Serine ADP-ribosylation at Ser-11 (H3S10ADPr) promotes recruitment of CHD1L. H3S10ADPr is mutually exclusive with phosphorylation at Ser-11 (H3S10ph) and impairs acetylation at Lys-10 (H3K9ac). Post-translationally, serotonylated by TGM2 at Gln-6 (H3Q5ser) during serotonergic neuron differentiation. H3Q5ser is associated with trimethylation of Lys-5 (H3K4me3) and enhances general transcription factor IID (TFIID) complex-binding to H3K4me3, thereby facilitating transcription. Dopaminylated by TGM2 at Gln-6 (H3Q5dop) in ventral tegmental area (VTA) neurons. H3Q5dop mediates neurotransmission-independent role of nuclear dopamine by regulating relapse-related transcriptional plasticity in the reward system. In terms of processing, lactylated in macrophages by EP300/P300 by using lactoyl-CoA directly derived from endogenous or exogenous lactate, leading to stimulates gene transcription.

Its subcellular location is the nucleus. The protein localises to the chromosome. In terms of biological role, core component of nucleosome. Nucleosomes wrap and compact DNA into chromatin, limiting DNA accessibility to the cellular machineries which require DNA as a template. Histones thereby play a central role in transcription regulation, DNA repair, DNA replication and chromosomal stability. DNA accessibility is regulated via a complex set of post-translational modifications of histones, also called histone code, and nucleosome remodeling. In Cricetulus longicaudatus (Long-tailed dwarf hamster), this protein is Histone H3.2.